We begin with the raw amino-acid sequence, 634 residues long: Putative ABC transporter ATP-binding protein MG015 homolog (634 aa).

A run of 6 helical transmembrane segments spans residues 54 to 74 (VLYV…NSIL), 111 to 131 (LTIV…FNVA), 189 to 209 (VGGQ…ILFV), 213 to 233 (VIAL…FLFL), 296 to 316 (VFIY…SISI), and 325 to 345 (IPSF…IAAL). One can recognise an ABC transmembrane type-1 domain in the interval 54 to 364 (VLYVMVCAIF…IFSLWNLIQL (311 aa)). The region spanning 397 to 631 (IRFEKVVFGY…NGFYARLKRS (235 aa)) is the ABC transporter domain. ATP is bound at residue 430 to 437 (GPTGAGKS).

This sequence belongs to the ABC transporter superfamily.

Its subcellular location is the cell membrane. In Mycoplasma pneumoniae (strain ATCC 29342 / M129 / Subtype 1) (Mycoplasmoides pneumoniae), this protein is Putative ABC transporter ATP-binding protein MG015 homolog.